We begin with the raw amino-acid sequence, 115 residues long: Guanylin (115 aa).

Residues 1-23 form the signal peptide; the sequence is MNAWLLSVLCLLGALAVLVEGVT. A propeptide spanning residues 24-100 is cleaved from the precursor; that stretch reads VQDGDLSFPL…LQRLEAIAQD (77 aa). 3 cysteine pairs are disulfide-bonded: Cys69-Cys82, Cys104-Cys112, and Cys107-Cys115.

It belongs to the guanylin family. Intestine and in low abundance in adrenal gland, kidney, and uterus/oviduct.

It is found in the secreted. Its function is as follows. Endogenous activator of intestinal guanylate cyclase. It stimulates this enzyme through the same receptor binding region as the heat-stable enterotoxins. This is Guanylin (Guca2a) from Rattus norvegicus (Rat).